Here is a 240-residue protein sequence, read N- to C-terminus: Poxin (240 aa).

Histidine 46 (proton donor) is an active-site residue. The active-site Shared with catalytic histidine of dimeric partner is tyrosine 181. Lysine 185 functions as the Proton acceptor; shared with catalytic histidine of dimeric partner in the catalytic mechanism.

The protein belongs to the poxin family. Homodimer.

It catalyses the reaction 2',3'-cGAMP + H2O = Gp(2'-5')Ap(3') + H(+). Its function is as follows. Nuclease that cleaves host 2',3'-cGAMP. The chain is Poxin (p26) from Bombyx mori (Silk moth).